An 82-amino-acid polypeptide reads, in one-letter code: Cytochrome b559 subunit alpha (82 aa).

Residues Ile22–Phe36 traverse the membrane as a helical segment. His24 is a binding site for heme.

It belongs to the PsbE/PsbF family. As to quaternary structure, heterodimer of an alpha subunit and a beta subunit. PSII is composed of 1 copy each of membrane proteins PsbA, PsbB, PsbC, PsbD, PsbE, PsbF, PsbH, PsbI, PsbJ, PsbK, PsbL, PsbM, PsbT, PsbX, PsbY, Psb30/Ycf12, peripheral proteins PsbO, CyanoQ (PsbQ), PsbU, PsbV and a large number of cofactors. It forms dimeric complexes. The cofactor is heme b.

It is found in the cellular thylakoid membrane. Functionally, this b-type cytochrome is tightly associated with the reaction center of photosystem II (PSII). PSII is a light-driven water:plastoquinone oxidoreductase that uses light energy to abstract electrons from H(2)O, generating O(2) and a proton gradient subsequently used for ATP formation. It consists of a core antenna complex that captures photons, and an electron transfer chain that converts photonic excitation into a charge separation. This is Cytochrome b559 subunit alpha from Prochlorococcus marinus (strain MIT 9211).